The chain runs to 268 residues: tRNA pseudouridine synthase A (268 aa).

Asp52 serves as the catalytic Nucleophile. Tyr113 serves as a coordination point for substrate.

This sequence belongs to the tRNA pseudouridine synthase TruA family. Homodimer.

The catalysed reaction is uridine(38/39/40) in tRNA = pseudouridine(38/39/40) in tRNA. Functionally, formation of pseudouridine at positions 38, 39 and 40 in the anticodon stem and loop of transfer RNAs. The protein is tRNA pseudouridine synthase A of Chlamydia felis (strain Fe/C-56) (Chlamydophila felis).